Reading from the N-terminus, the 215-residue chain is UPF0502 protein YceH (215 aa).

N6-acetyllysine is present on K80.

Belongs to the UPF0502 family.

This chain is UPF0502 protein YceH, found in Escherichia coli O81 (strain ED1a).